A 440-amino-acid polypeptide reads, in one-letter code: Muscarinic acetylcholine receptor M2 (440 aa).

The helical transmembrane segment at 1–19 threads the bilayer; the sequence is VLVAGSLSLVTIIGNILVM. The Cytoplasmic portion of the chain corresponds to 20-33; the sequence is VSIKVNRHLQTVNN. The helical transmembrane segment at 34–54 threads the bilayer; sequence YFLFSLACADLIIGVFSMNLY. At 55-71 the chain is on the extracellular side; sequence TLYTVIGYWPLGPVVCD. A disulfide bond links Cys-70 and Cys-150. A helical transmembrane segment spans residues 72–93; the sequence is LWLALDYVVSNASVMNLLIISF. The Important for signaling signature appears at 94–96; it reads DRY. At 94–113 the chain is on the cytoplasmic side; it reads DRYFCVTKPLTYPVKRTTKM. The chain crosses the membrane as a helical span at residues 114 to 136; sequence AGMMIAAAWVLSFILWAPAILFW. Topologically, residues 137–158 are extracellular; that stretch reads QFIVGVRTVEDGECYIQFFSNA. A helical membrane pass occupies residues 159 to 183; that stretch reads AVTFGTAIAAFYLPVIIMTVLYWHI. Residues 184-361 lie on the Cytoplasmic side of the membrane; the sequence is SRASKSRIKK…PPSREKKVTR (178 aa). The segment at 192 to 329 is disordered; sequence KKDKKEPVAN…VVGSSGQNGD (138 aa). Residue Ser-206 is modified to Phosphoserine. Residues 228-244 show a composition bias toward basic and acidic residues; sequence GLEHNKIQNGKAPRDPV. 3 stretches are compositionally biased toward polar residues: residues 258–267, 278–287, and 308–327; these read NDSTSVSAVA, DENTVSTSLG, and SDSCTPTNTTVEVVGSSGQN. The chain crosses the membrane as a helical span at residues 362–384; it reads TILAILLAFIITWAPYNVMVLIN. Over 385 to 392 the chain is Extracellular; the sequence is TFCAPCIP. Cys-387 and Cys-390 are disulfide-bonded. A helical membrane pass occupies residues 393-416; that stretch reads NTVWTIGYWLCYINSTINPACYAL. Residues 410-414 carry the Important for signaling motif; it reads NPACY. Residues 417 to 440 lie on the Cytoplasmic side of the membrane; it reads CNATFKKTFKHLLMCHYKNIGATR. Thr-420, Thr-424, and Thr-439 each carry phosphothreonine.

This sequence belongs to the G-protein coupled receptor 1 family. Muscarinic acetylcholine receptor subfamily. CHRM2 sub-subfamily. Interacts with ARRB1 and ARRB2. Interacts with RACK1; the interaction regulates CHRM2 internalization. Phosphorylated in response to agonist treatment.

Its subcellular location is the cell membrane. The protein localises to the postsynaptic cell membrane. Functionally, the muscarinic acetylcholine receptor mediates various cellular responses, including inhibition of adenylate cyclase, breakdown of phosphoinositides and modulation of potassium channels through the action of G proteins. Primary transducing effect is adenylate cyclase inhibition. Signaling promotes phospholipase C activity, leading to the release of inositol trisphosphate (IP3); this then triggers calcium ion release into the cytosol. The sequence is that of Muscarinic acetylcholine receptor M2 (CHRM2) from Pan troglodytes (Chimpanzee).